Here is a 50-residue protein sequence, read N- to C-terminus: Protein PsbN (50 aa).

A helical transmembrane segment spans residues 14 to 34 (IAVTILAILLALTGFGLWSAF).

This sequence belongs to the PsbN family.

The protein localises to the cellular thylakoid membrane. In terms of biological role, may play a role in photosystem I and II biogenesis. In Prochlorococcus marinus (strain MIT 9215), this protein is Protein PsbN.